The chain runs to 356 residues: tRNA-specific 2-thiouridylase MnmA (356 aa).

Residues 8 to 15 and Met-34 each bind ATP; that span reads GMSGGVDS. Cys-103 serves as the catalytic Nucleophile. Cys-103 and Cys-199 are oxidised to a cystine. Residue Gly-127 participates in ATP binding. The segment at 149–151 is interaction with tRNA; sequence KDQ. The active-site Cysteine persulfide intermediate is the Cys-199. Positions 305-306 are interaction with tRNA; the sequence is RY.

Belongs to the MnmA/TRMU family.

The protein localises to the cytoplasm. The catalysed reaction is S-sulfanyl-L-cysteinyl-[protein] + uridine(34) in tRNA + AH2 + ATP = 2-thiouridine(34) in tRNA + L-cysteinyl-[protein] + A + AMP + diphosphate + H(+). Its function is as follows. Catalyzes the 2-thiolation of uridine at the wobble position (U34) of tRNA, leading to the formation of s(2)U34. This Clostridium kluyveri (strain ATCC 8527 / DSM 555 / NBRC 12016 / NCIMB 10680 / K1) protein is tRNA-specific 2-thiouridylase MnmA.